Here is a 433-residue protein sequence, read N- to C-terminus: Glutamate-1-semialdehyde 2,1-aminomutase (433 aa).

At Lys-273 the chain carries N6-(pyridoxal phosphate)lysine.

This sequence belongs to the class-III pyridoxal-phosphate-dependent aminotransferase family. HemL subfamily. Homodimer. Pyridoxal 5'-phosphate is required as a cofactor.

Its subcellular location is the cytoplasm. It carries out the reaction (S)-4-amino-5-oxopentanoate = 5-aminolevulinate. Its pathway is porphyrin-containing compound metabolism; protoporphyrin-IX biosynthesis; 5-aminolevulinate from L-glutamyl-tRNA(Glu): step 2/2. The protein operates within porphyrin-containing compound metabolism; chlorophyll biosynthesis. The sequence is that of Glutamate-1-semialdehyde 2,1-aminomutase from Rippkaea orientalis (strain PCC 8801 / RF-1) (Cyanothece sp. (strain PCC 8801)).